The sequence spans 339 residues: Biotin synthase (339 aa).

Positions 47–276 constitute a Radical SAM core domain; that stretch reads FYGKKVKLNM…SKEIRISGGR (230 aa). Positions 65, 69, and 72 each coordinate [4Fe-4S] cluster. C109, C141, C201, and R271 together coordinate [2Fe-2S] cluster.

It belongs to the radical SAM superfamily. Biotin synthase family. As to quaternary structure, homodimer. It depends on [4Fe-4S] cluster as a cofactor. Requires [2Fe-2S] cluster as cofactor.

The enzyme catalyses (4R,5S)-dethiobiotin + (sulfur carrier)-SH + 2 reduced [2Fe-2S]-[ferredoxin] + 2 S-adenosyl-L-methionine = (sulfur carrier)-H + biotin + 2 5'-deoxyadenosine + 2 L-methionine + 2 oxidized [2Fe-2S]-[ferredoxin]. The protein operates within cofactor biosynthesis; biotin biosynthesis; biotin from 7,8-diaminononanoate: step 2/2. In terms of biological role, catalyzes the conversion of dethiobiotin (DTB) to biotin by the insertion of a sulfur atom into dethiobiotin via a radical-based mechanism. The chain is Biotin synthase from Bacillus velezensis (strain DSM 23117 / BGSC 10A6 / LMG 26770 / FZB42) (Bacillus amyloliquefaciens subsp. plantarum).